The primary structure comprises 108 residues: Insulin (108 aa).

The first 24 residues, 1 to 24 (MALWMHLLPLLALLALWGPEPAPA), serve as a signal peptide directing secretion. 3 disulfides stabilise this stretch: Cys31/Cys94, Cys43/Cys107, and Cys93/Cys98. Positions 57–85 (EAEDLQVGQVELGGGSITGSLPPLEGPMQ) are cleaved as a propeptide — c peptide.

The protein belongs to the insulin family. As to quaternary structure, heterodimer of a B chain and an A chain linked by two disulfide bonds.

It localises to the secreted. In terms of biological role, insulin decreases blood glucose concentration. It increases cell permeability to monosaccharides, amino acids and fatty acids. It accelerates glycolysis, the pentose phosphate cycle, and glycogen synthesis in liver. The polypeptide is Insulin (INS) (Aotus trivirgatus (Three-striped night monkey)).